Here is a 477-residue protein sequence, read N- to C-terminus: UDP-N-acetylglucosamine pyrophosphorylase (477 aa).

Residues 109–112 (MAGG) carry the Substrate binding motif. Residues 109-112 (MAGG), lysine 123, and glutamine 194 each bind UTP. Residue serine 218 is modified to Phosphoserine. Residue glycine 221 participates in UTP binding. A substrate-binding site is contributed by asparagine 222. Aspartate 252 provides a ligand contact to UTP. The Substrate binding motif lies at 302–303 (EY). Residue lysine 377 coordinates UTP. Lysine 409 contributes to the substrate binding site. Serine 461 carries the post-translational modification Phosphoserine.

The protein belongs to the UDPGP type 1 family.

It is found in the cytoplasm. The enzyme catalyses N-acetyl-alpha-D-glucosamine 1-phosphate + UTP + H(+) = UDP-N-acetyl-alpha-D-glucosamine + diphosphate. It participates in nucleotide-sugar biosynthesis; UDP-N-acetyl-alpha-D-glucosamine biosynthesis; UDP-N-acetyl-alpha-D-glucosamine from N-acetyl-alpha-D-glucosamine 1-phosphate: step 1/1. Its function is as follows. UDP-N-acetylglucosamine pyrophosphorylase that utilizes N-acetylglucosamine-1-phosphate as substrate. Together with AGM1, is involved in the production of UDP-N-acetylglucosamine from N-acetylglucosamine-6-phosphate. The polypeptide is UDP-N-acetylglucosamine pyrophosphorylase (QRI1) (Saccharomyces cerevisiae (strain ATCC 204508 / S288c) (Baker's yeast)).